The primary structure comprises 365 residues: Chorismate synthase (365 aa).

Arg-48 and Arg-54 together coordinate NADP(+). FMN contacts are provided by residues 125–127 (RSS), 238–239 (NA), Gly-278, 293–297 (KPTSS), and Arg-319.

It belongs to the chorismate synthase family. As to quaternary structure, homotetramer. The cofactor is FMNH2.

It catalyses the reaction 5-O-(1-carboxyvinyl)-3-phosphoshikimate = chorismate + phosphate. Its pathway is metabolic intermediate biosynthesis; chorismate biosynthesis; chorismate from D-erythrose 4-phosphate and phosphoenolpyruvate: step 7/7. In terms of biological role, catalyzes the anti-1,4-elimination of the C-3 phosphate and the C-6 proR hydrogen from 5-enolpyruvylshikimate-3-phosphate (EPSP) to yield chorismate, which is the branch point compound that serves as the starting substrate for the three terminal pathways of aromatic amino acid biosynthesis. This reaction introduces a second double bond into the aromatic ring system. This is Chorismate synthase from Alteromonas mediterranea (strain DSM 17117 / CIP 110805 / LMG 28347 / Deep ecotype).